The chain runs to 428 residues: E3 ubiquitin-protein ligase RNF128 (428 aa).

The first 38 residues, 1–38 (MGPPPGIGVYCRGGCGAARLLAWCFLLALSPHAPGSRG), serve as a signal peptide directing secretion. N48, N59, and N101 each carry an N-linked (GlcNAc...) asparagine glycan. The PA domain occupies 75–183 (SPLEPVSGVL…LKGTKILQSI (109 aa)). Residues 208 to 228 (IFFVSVSFFIITAATVGYFIF) form a helical membrane-spanning segment. The RING-type; atypical zinc finger occupies 277-318 (CAVCIELYKPNDLVRILTCNHIFHKTCVDPWLLEHRTCPMCK). Polar residues predominate over residues 342–351 (VSNEASNTAS). Residues 342–428 (VSNEASNTAS…QEAAVREIKS (87 aa)) form a disordered region.

Auto-ubiquitinated. Controls the development of T-cell clonal anergy by ubiquitination. In terms of tissue distribution, expressed in brain, kidney, heart, liver, ovary, testis and thymus. Expression increased as early as 4 hours by 5- to 7-fold in anergized cultures as compared to resting or activated cells.

It is found in the cytoplasm. The protein localises to the endomembrane system. It localises to the cytoskeleton. Its subcellular location is the perinuclear region. The catalysed reaction is S-ubiquitinyl-[E2 ubiquitin-conjugating enzyme]-L-cysteine + [acceptor protein]-L-lysine = [E2 ubiquitin-conjugating enzyme]-L-cysteine + N(6)-ubiquitinyl-[acceptor protein]-L-lysine.. Its pathway is protein modification; protein ubiquitination. E3 ubiquitin-protein ligase that catalyzes 'Lys-27', 'Lys-48'- or 'Lys-63'-linked polyubiquitin chains formation and plays a role in different biological processes such as modulation of immune response, cytoskeletal dynamics or protein homeostasis. Inhibits IL2 and IL4 transcription, thereby playing an important role in the induction of the anergic phenotype, a long-term stable state of T-lymphocyte unresponsiveness to antigenic stimulation associated with the blockade of interleukin production. Ubiquitinates ARPC5 with 'Lys-48' linkages and COR1A with 'Lys-63' linkages leading to their degradation, down-regulation of these cytoskeletal components results in impaired lamellipodium formation and reduced accumulation of F-actin at the immunological synapse. Functions in the patterning of the dorsal ectoderm; sensitizes ectoderm to respond to neural-inducing signals. Plays a positive role in innate immune response by promoting 'Lys-63'-linked ubiquitination of TBK1 after RNA- or DNA-virus infection. Regulates alveolar macrophage activation and neutrophil infiltration by interacting with TLR4, targeting it for degradation, and inhibiting NF-kappa-B activation, hence decreasing pro-inflammatory cytokines. Negatively regulates the IL-3/STAT5 signaling pathway by facilitating 'Lys-27'-linked polyubiquitination of IL3RA leading to its degradation via lysosomal pathway. Directly regulates the N-glycosylation process in the endoplasmic reticulum by targeting the glycosyl-transferase RPN1 for ubiquitination and degradation. Other substrates targeted for degradation by RNF128 include transmembrane proteins CD40L, CD83 or the tetraspanin CD151. The polypeptide is E3 ubiquitin-protein ligase RNF128 (Rnf128) (Mus musculus (Mouse)).